The chain runs to 421 residues: Serine hydroxymethyltransferase (421 aa).

(6S)-5,6,7,8-tetrahydrofolate is bound by residues leucine 118 and 122 to 124 (GHL). Lysine 226 bears the N6-(pyridoxal phosphate)lysine mark. Glutamate 242 contacts (6S)-5,6,7,8-tetrahydrofolate.

It belongs to the SHMT family. Homodimer. The cofactor is pyridoxal 5'-phosphate.

Its subcellular location is the cytoplasm. The enzyme catalyses (6R)-5,10-methylene-5,6,7,8-tetrahydrofolate + glycine + H2O = (6S)-5,6,7,8-tetrahydrofolate + L-serine. It participates in one-carbon metabolism; tetrahydrofolate interconversion. The protein operates within amino-acid biosynthesis; glycine biosynthesis; glycine from L-serine: step 1/1. Functionally, catalyzes the reversible interconversion of serine and glycine with tetrahydrofolate (THF) serving as the one-carbon carrier. This reaction serves as the major source of one-carbon groups required for the biosynthesis of purines, thymidylate, methionine, and other important biomolecules. Also exhibits THF-independent aldolase activity toward beta-hydroxyamino acids, producing glycine and aldehydes, via a retro-aldol mechanism. In Mycoplasmopsis synoviae (strain 53) (Mycoplasma synoviae), this protein is Serine hydroxymethyltransferase.